A 318-amino-acid chain; its full sequence is Ribonuclease Z (318 aa).

7 residues coordinate Zn(2+): His-62, His-64, Asp-66, His-67, His-144, Asp-215, and His-273. Asp-66 functions as the Proton acceptor in the catalytic mechanism.

The protein belongs to the RNase Z family. As to quaternary structure, homodimer. The cofactor is Zn(2+).

The catalysed reaction is Endonucleolytic cleavage of RNA, removing extra 3' nucleotides from tRNA precursor, generating 3' termini of tRNAs. A 3'-hydroxy group is left at the tRNA terminus and a 5'-phosphoryl group is left at the trailer molecule.. Its function is as follows. Zinc phosphodiesterase, which displays some tRNA 3'-processing endonuclease activity. Probably involved in tRNA maturation, by removing a 3'-trailer from precursor tRNA. The protein is Ribonuclease Z of Prochlorococcus marinus (strain MIT 9303).